Reading from the N-terminus, the 330-residue chain is Probable deoxyhypusine synthase (330 aa).

K303 serves as the catalytic Nucleophile.

The protein belongs to the deoxyhypusine synthase family. NAD(+) is required as a cofactor.

It catalyses the reaction [eIF5A protein]-L-lysine + spermidine = [eIF5A protein]-deoxyhypusine + propane-1,3-diamine. It participates in protein modification; eIF5A hypusination. Functionally, catalyzes the NAD-dependent oxidative cleavage of spermidine and the subsequent transfer of the butylamine moiety of spermidine to the epsilon-amino group of a specific lysine residue of the eIF-5A precursor protein to form the intermediate deoxyhypusine residue. In Methanocaldococcus jannaschii (strain ATCC 43067 / DSM 2661 / JAL-1 / JCM 10045 / NBRC 100440) (Methanococcus jannaschii), this protein is Probable deoxyhypusine synthase (dys).